Here is a 216-residue protein sequence, read N- to C-terminus: Probable nicotinate-nucleotide adenylyltransferase (216 aa).

This sequence belongs to the NadD family.

The catalysed reaction is nicotinate beta-D-ribonucleotide + ATP + H(+) = deamido-NAD(+) + diphosphate. It participates in cofactor biosynthesis; NAD(+) biosynthesis; deamido-NAD(+) from nicotinate D-ribonucleotide: step 1/1. Catalyzes the reversible adenylation of nicotinate mononucleotide (NaMN) to nicotinic acid adenine dinucleotide (NaAD). In Shewanella baltica (strain OS195), this protein is Probable nicotinate-nucleotide adenylyltransferase.